The primary structure comprises 122 residues: Holo-[acyl-carrier-protein] synthase (122 aa).

The Mg(2+) site is built by D8 and E57.

This sequence belongs to the P-Pant transferase superfamily. AcpS family. Mg(2+) serves as cofactor.

It localises to the cytoplasm. The enzyme catalyses apo-[ACP] + CoA = holo-[ACP] + adenosine 3',5'-bisphosphate + H(+). Its function is as follows. Transfers the 4'-phosphopantetheine moiety from coenzyme A to a Ser of acyl-carrier-protein. This is Holo-[acyl-carrier-protein] synthase from Exiguobacterium sp. (strain ATCC BAA-1283 / AT1b).